Reading from the N-terminus, the 477-residue chain is Ribulose bisphosphate carboxylase large chain (477 aa).

Positions 1–2 (MS) are excised as a propeptide. An N-acetylproline modification is found at proline 3. Lysine 14 is modified (N6,N6,N6-trimethyllysine). Substrate-binding residues include asparagine 123 and threonine 173. Lysine 175 (proton acceptor) is an active-site residue. Lysine 177 is a substrate binding site. The Mg(2+) site is built by lysine 201, aspartate 203, and glutamate 204. An N6-carboxylysine modification is found at lysine 201. Histidine 294 functions as the Proton acceptor in the catalytic mechanism. Positions 295, 327, and 379 each coordinate substrate.

It belongs to the RuBisCO large chain family. Type I subfamily. In terms of assembly, heterohexadecamer of 8 large chains and 8 small chains; disulfide-linked. The disulfide link is formed within the large subunit homodimers. Mg(2+) is required as a cofactor. In terms of processing, the disulfide bond which can form in the large chain dimeric partners within the hexadecamer appears to be associated with oxidative stress and protein turnover.

It is found in the plastid. Its subcellular location is the chloroplast. It catalyses the reaction 2 (2R)-3-phosphoglycerate + 2 H(+) = D-ribulose 1,5-bisphosphate + CO2 + H2O. It carries out the reaction D-ribulose 1,5-bisphosphate + O2 = 2-phosphoglycolate + (2R)-3-phosphoglycerate + 2 H(+). RuBisCO catalyzes two reactions: the carboxylation of D-ribulose 1,5-bisphosphate, the primary event in carbon dioxide fixation, as well as the oxidative fragmentation of the pentose substrate in the photorespiration process. Both reactions occur simultaneously and in competition at the same active site. This Atropa belladonna (Belladonna) protein is Ribulose bisphosphate carboxylase large chain.